The sequence spans 545 residues: CTP synthase (545 aa).

The amidoligase domain stretch occupies residues 1 to 266; sequence MTHFIFVTGG…DDLICERFGF (266 aa). CTP is bound at residue serine 13. Serine 13 is a binding site for UTP. ATP is bound by residues 14-19 and aspartate 71; that span reads SLGKGI. Residues aspartate 71 and glutamate 140 each contribute to the Mg(2+) site. Residues 147-149, 187-192, and lysine 223 contribute to the CTP site; these read DIE and KTKPTQ. UTP contacts are provided by residues 187-192 and lysine 223; that span reads KTKPTQ. 239–241 provides a ligand contact to ATP; that stretch reads KDA. The 252-residue stretch at 292–543 folds into the Glutamine amidotransferase type-1 domain; it reads RVAMVGKYVE…IDAAKTQHQK (252 aa). Glycine 353 is an L-glutamine binding site. Cysteine 380 serves as the catalytic Nucleophile; for glutamine hydrolysis. Residues 381–384, glutamate 404, and arginine 471 each bind L-glutamine; that span reads LGMQ. Active-site residues include histidine 516 and glutamate 518.

The protein belongs to the CTP synthase family. Homotetramer.

The enzyme catalyses UTP + L-glutamine + ATP + H2O = CTP + L-glutamate + ADP + phosphate + 2 H(+). The catalysed reaction is L-glutamine + H2O = L-glutamate + NH4(+). It carries out the reaction UTP + NH4(+) + ATP = CTP + ADP + phosphate + 2 H(+). Its pathway is pyrimidine metabolism; CTP biosynthesis via de novo pathway; CTP from UDP: step 2/2. Allosterically activated by GTP, when glutamine is the substrate; GTP has no effect on the reaction when ammonia is the substrate. The allosteric effector GTP functions by stabilizing the protein conformation that binds the tetrahedral intermediate(s) formed during glutamine hydrolysis. Inhibited by the product CTP, via allosteric rather than competitive inhibition. In terms of biological role, catalyzes the ATP-dependent amination of UTP to CTP with either L-glutamine or ammonia as the source of nitrogen. Regulates intracellular CTP levels through interactions with the four ribonucleotide triphosphates. This chain is CTP synthase, found in Acinetobacter baumannii (strain ACICU).